The primary structure comprises 333 residues: Putative F-box protein At4g11580 (333 aa).

The F-box domain occupies 11–58 (VSEWADLNKDILELIFNKLDVMDITMGASRVCISWFLASHNKTLWNTV).

This is Putative F-box protein At4g11580 from Arabidopsis thaliana (Mouse-ear cress).